Consider the following 582-residue polypeptide: Myoneurin (582 aa).

A BTB domain is found at 24 to 89 (CDCTIVIGEF…IYTGTLNLDS (66 aa)). The disordered stretch occupies residues 169–197 (QGALAKKSSQTKKKKKAFNSPKTGQNKTV). Short sequence motifs (nuclear localization signal) lie at residues 174 to 190 (KKSS…NSPK) and 257 to 262 (KRKRGK). Residues 188–197 (SPKTGQNKTV) are compositionally biased toward polar residues. Serine 289 is modified (phosphoserine). The segment at 302 to 324 (PMCNTRGKVFSEASSLRRHMRIH) adopts a C2H2-type 1; degenerate zinc-finger fold. 6 C2H2-type zinc fingers span residues 330–352 (YVCH…VRTH), 358–381 (YKCE…RMHH), 387–409 (YKCD…ARKH), 415–437 (YVCD…VRRH), 443–465 (YVCD…SRKH), and 471–494 (FICE…TKVH). Positions 489–538 (HKTKVHSGADKTPDSSAEDHTLSEQDSIQKSPLSETMDVKPSDTTLPLAL) are disordered. The segment covering 495–511 (SGADKTPDSSAEDHTLS) has biased composition (basic and acidic residues). Residues 512 to 522 (EQDSIQKSPLS) show a composition bias toward polar residues.

It belongs to the krueppel C2H2-type zinc-finger protein family.

It is found in the nucleus. This Pongo abelii (Sumatran orangutan) protein is Myoneurin (MYNN).